A 341-amino-acid polypeptide reads, in one-letter code: MNIEDFDYHLPESLIAQTPLKNRDQSRLLVLSKDTGELTHLHFRDVIHYFEPGDTLVLNDTRVMPARLFGLKEETGAKVEMLMLTQIEGNDWEVLLKPAKRIKKGHRLNFGDGKIVAECIEELEQGGRIMRLHYEGILQERLDELGDMPLPPYIKERLDDPDRYQTVYAKESGSAAAPTAGLHFTDDLLNKIKQKGVHIAFITLHVGLGTFRPVSVENIDDHEMHSEYYQMTQETADLLNKTKESGKRVISVGTTSTRTLETIRRDHPQFVATSGWTDIFIYPGFEFKAIDGLITNFHLPKSTLVMLVSAFSNKKYILNAYHKAVEMEYRFFSFGDAMLII.

The protein belongs to the QueA family. Monomer.

It is found in the cytoplasm. The catalysed reaction is 7-aminomethyl-7-carbaguanosine(34) in tRNA + S-adenosyl-L-methionine = epoxyqueuosine(34) in tRNA + adenine + L-methionine + 2 H(+). It participates in tRNA modification; tRNA-queuosine biosynthesis. In terms of biological role, transfers and isomerizes the ribose moiety from AdoMet to the 7-aminomethyl group of 7-deazaguanine (preQ1-tRNA) to give epoxyqueuosine (oQ-tRNA). This Staphylococcus epidermidis (strain ATCC 35984 / DSM 28319 / BCRC 17069 / CCUG 31568 / BM 3577 / RP62A) protein is S-adenosylmethionine:tRNA ribosyltransferase-isomerase.